A 410-amino-acid polypeptide reads, in one-letter code: Phosphoserine phosphatase (410 aa).

Residues 13 to 91 (LVKIFGKDRP…QAEIISGIGD (79 aa)) form the ACT domain. The Nucleophile role is filled by Asp-187. Mg(2+) contacts are provided by Asp-187 and Asp-189. Asp-189 serves as the catalytic Proton donor. Residues Glu-196, Arg-232, 275–276 (SG), and Lys-320 each bind substrate. A Mg(2+)-binding site is contributed by Asp-343. Substrate is bound at residue Asn-346.

This sequence belongs to the HAD-like hydrolase superfamily. SerB family. It depends on Mg(2+) as a cofactor.

The catalysed reaction is O-phospho-L-serine + H2O = L-serine + phosphate. It catalyses the reaction O-phospho-D-serine + H2O = D-serine + phosphate. It functions in the pathway amino-acid biosynthesis; L-serine biosynthesis; L-serine from 3-phospho-D-glycerate: step 3/3. Its function is as follows. Catalyzes the dephosphorylation of phosphoserine (P-Ser) in vitro. Also catalyzes the dephosphorylation of phosphothreonine (P-Thr) in vitro. The polypeptide is Phosphoserine phosphatase (Streptomyces coelicolor (strain ATCC BAA-471 / A3(2) / M145)).